We begin with the raw amino-acid sequence, 332 residues long: UPF0285 protein MK0078 (332 aa).

It belongs to the UPF0285 family.

The sequence is that of UPF0285 protein MK0078 from Methanopyrus kandleri (strain AV19 / DSM 6324 / JCM 9639 / NBRC 100938).